Reading from the N-terminus, the 141-residue chain is Large ribosomal subunit protein uL13 (141 aa).

This sequence belongs to the universal ribosomal protein uL13 family. In terms of assembly, part of the 50S ribosomal subunit.

In terms of biological role, this protein is one of the early assembly proteins of the 50S ribosomal subunit, although it is not seen to bind rRNA by itself. It is important during the early stages of 50S assembly. The polypeptide is Large ribosomal subunit protein uL13 (Deinococcus deserti (strain DSM 17065 / CIP 109153 / LMG 22923 / VCD115)).